The primary structure comprises 128 residues: Lysozyme C-1 (128 aa).

In terms of domain architecture, C-type lysozyme spans 1–128 (KVYDRCEFAR…VSQYIRGCKL (128 aa)). 4 disulfide bridges follow: C6/C126, C30/C114, C63/C79, and C75/C93. Catalysis depends on residues E35 and D51.

This sequence belongs to the glycosyl hydrolase 22 family. Monomer.

The protein localises to the secreted. It carries out the reaction Hydrolysis of (1-&gt;4)-beta-linkages between N-acetylmuramic acid and N-acetyl-D-glucosamine residues in a peptidoglycan and between N-acetyl-D-glucosamine residues in chitodextrins.. Lysozymes have primarily a bacteriolytic function; those in tissues and body fluids are associated with the monocyte-macrophage system and enhance the activity of immunoagents. The chain is Lysozyme C-1 from Sus scrofa (Pig).